We begin with the raw amino-acid sequence, 120 residues long: NAD(P)H-quinone oxidoreductase subunit 3, chloroplastic (120 aa).

3 consecutive transmembrane segments (helical) span residues 3-23 (ILEG…IPVI), 64-84 (MFAL…PWAV), and 89-109 (LGLS…IGLV).

It belongs to the complex I subunit 3 family. In terms of assembly, NDH is composed of at least 16 different subunits, 5 of which are encoded in the nucleus.

The protein resides in the plastid. The protein localises to the chloroplast thylakoid membrane. It carries out the reaction a plastoquinone + NADH + (n+1) H(+)(in) = a plastoquinol + NAD(+) + n H(+)(out). It catalyses the reaction a plastoquinone + NADPH + (n+1) H(+)(in) = a plastoquinol + NADP(+) + n H(+)(out). In terms of biological role, NDH shuttles electrons from NAD(P)H:plastoquinone, via FMN and iron-sulfur (Fe-S) centers, to quinones in the photosynthetic chain and possibly in a chloroplast respiratory chain. The immediate electron acceptor for the enzyme in this species is believed to be plastoquinone. Couples the redox reaction to proton translocation, and thus conserves the redox energy in a proton gradient. The sequence is that of NAD(P)H-quinone oxidoreductase subunit 3, chloroplastic from Nephroselmis olivacea (Green alga).